The sequence spans 159 residues: Putative esterase DR_2406 (159 aa).

This sequence belongs to the thioesterase PaaI family.

This Deinococcus radiodurans (strain ATCC 13939 / DSM 20539 / JCM 16871 / CCUG 27074 / LMG 4051 / NBRC 15346 / NCIMB 9279 / VKM B-1422 / R1) protein is Putative esterase DR_2406.